We begin with the raw amino-acid sequence, 762 residues long: Primary amine oxidase, lung isozyme (762 aa).

A signal peptide spans 1-16 (MFIFIFLSLWTLLVMG). Residues 23–54 (GSEEGVGKQCHPSLPPRCPSRSPSDQPWTHPD) form a disordered region. N-linked (GlcNAc...) asparagine glycosylation is present at Asn136. The cysteines at positions 197 and 198 are disulfide-linked. O-linked (GalNAc...) threonine glycosylation is present at Thr211. N-linked (GlcNAc...) asparagine glycans are attached at residues Asn231 and Asn293. Position 383-393 (383-393 (YMDACFGMGKF)) interacts with substrate. Asp385 (proton acceptor) is an active-site residue. The cysteines at positions 403 and 429 are disulfide-linked. 467–472 (LLNYDY) is a binding site for substrate. Tyr470 functions as the Schiff-base intermediate with substrate; via topaquinone in the catalytic mechanism. Tyr470 carries the post-translational modification 2',4',5'-topaquinone. The Cu cation site is built by His519 and His521. 4 residues coordinate Ca(2+): Asp528, Leu529, Asp530, and Glu571. Residue 577 to 584 (PLGGGSPR) coordinates heparin. Asn617 carries N-linked (GlcNAc...) asparagine glycosylation. Residues Phe662 and Asn664 each coordinate Ca(2+). An N-linked (GlcNAc...) asparagine glycan is attached at Asn665. Ca(2+) contacts are provided by Glu666, Asp672, and Leu673. His683 provides a ligand contact to Cu cation. Cys733 and Cys740 form a disulfide bridge.

Belongs to the copper/topaquinone oxidase family. As to quaternary structure, homodimer; disulfide-linked. The cofactor is Cu cation. Ca(2+) is required as a cofactor. L-topaquinone serves as cofactor. In terms of processing, topaquinone (TPQ) is generated by copper-dependent autoxidation of a specific tyrosyl residue. In terms of tissue distribution, expressed in lung, spleen, heart and kidney.

Its subcellular location is the secreted. It localises to the extracellular space. The catalysed reaction is a primary methyl amine + O2 + H2O = an aldehyde + H2O2 + NH4(+). The polypeptide is Primary amine oxidase, lung isozyme (Bos taurus (Bovine)).